A 361-amino-acid chain; its full sequence is dTDP-glucose 4,6-dehydratase (361 aa).

NAD(+) contacts are provided by residues 11 to 12 (FI), 32 to 35 (DKLT), 58 to 59 (DI), 80 to 84 (LAAES), and T99. S84 is a binding site for substrate. T133 lines the substrate pocket. D134 (proton donor) is an active-site residue. Residues E135 and Y167 each act as proton acceptor in the active site. 167-171 (YSASK) contributes to the NAD(+) binding site. N196 contributes to the substrate binding site. N197 contributes to the NAD(+) binding site. Residues 206–207 (KL), 222–224 (PIY), R231, N266, and 296–300 (DRPGH) each bind substrate.

This sequence belongs to the NAD(P)-dependent epimerase/dehydratase family. dTDP-glucose dehydratase subfamily. In terms of assembly, homodimer. The cofactor is NAD(+).

It carries out the reaction dTDP-alpha-D-glucose = dTDP-4-dehydro-6-deoxy-alpha-D-glucose + H2O. The protein operates within carbohydrate biosynthesis; dTDP-L-rhamnose biosynthesis. It participates in bacterial outer membrane biogenesis; LPS O-antigen biosynthesis. Catalyzes the dehydration of dTDP-D-glucose to form dTDP-6-deoxy-D-xylo-4-hexulose via a three-step process involving oxidation, dehydration and reduction. In Escherichia coli, this protein is dTDP-glucose 4,6-dehydratase (rfbB).